The sequence spans 172 residues: Bacilliredoxin SRU_0242 (172 aa).

The disordered stretch occupies residues 141–172 (TDEAPPSDAPSRPDLSSSPNAGGLPSTFQSIS). The span at 154–172 (DLSSSPNAGGLPSTFQSIS) shows a compositional bias: polar residues.

It belongs to the bacilliredoxin family.

This chain is Bacilliredoxin SRU_0242, found in Salinibacter ruber (strain DSM 13855 / M31).